A 209-amino-acid chain; its full sequence is Thiamine-phosphate synthase (209 aa).

4-amino-2-methyl-5-(diphosphooxymethyl)pyrimidine is bound by residues 36–40 and Asn68; that span reads QYRDK. Mg(2+) is bound by residues Asp69 and Asp87. Position 106 (Thr106) interacts with 4-amino-2-methyl-5-(diphosphooxymethyl)pyrimidine. 133–135 provides a ligand contact to 2-[(2R,5Z)-2-carboxy-4-methylthiazol-5(2H)-ylidene]ethyl phosphate; that stretch reads SST. Residue Lys136 coordinates 4-amino-2-methyl-5-(diphosphooxymethyl)pyrimidine. Gly163 is a binding site for 2-[(2R,5Z)-2-carboxy-4-methylthiazol-5(2H)-ylidene]ethyl phosphate.

This sequence belongs to the thiamine-phosphate synthase family. It depends on Mg(2+) as a cofactor.

The catalysed reaction is 2-[(2R,5Z)-2-carboxy-4-methylthiazol-5(2H)-ylidene]ethyl phosphate + 4-amino-2-methyl-5-(diphosphooxymethyl)pyrimidine + 2 H(+) = thiamine phosphate + CO2 + diphosphate. The enzyme catalyses 2-(2-carboxy-4-methylthiazol-5-yl)ethyl phosphate + 4-amino-2-methyl-5-(diphosphooxymethyl)pyrimidine + 2 H(+) = thiamine phosphate + CO2 + diphosphate. It catalyses the reaction 4-methyl-5-(2-phosphooxyethyl)-thiazole + 4-amino-2-methyl-5-(diphosphooxymethyl)pyrimidine + H(+) = thiamine phosphate + diphosphate. The protein operates within cofactor biosynthesis; thiamine diphosphate biosynthesis; thiamine phosphate from 4-amino-2-methyl-5-diphosphomethylpyrimidine and 4-methyl-5-(2-phosphoethyl)-thiazole: step 1/1. Functionally, condenses 4-methyl-5-(beta-hydroxyethyl)thiazole monophosphate (THZ-P) and 2-methyl-4-amino-5-hydroxymethyl pyrimidine pyrophosphate (HMP-PP) to form thiamine monophosphate (TMP). This is Thiamine-phosphate synthase from Pseudomonas paraeruginosa (strain DSM 24068 / PA7) (Pseudomonas aeruginosa (strain PA7)).